Here is a 350-residue protein sequence, read N- to C-terminus: MALVTTTPTVNDEPLFAEVDMASYFTSTTVRATVVQASTIFYDTPATLDKAERLLVQAASYGAQIVVFPEAFIGGYPRGSNFGVSIGNRTAKGKEEFRKYHSAAIDVPGPEVDRLSAMAGKYKVYLVMGVIERDGYTLYCTVLFFDSQGRYLGKHRKVMPTALERIIWGFGDGSTIPVFQTPIGKIGAAICWENKMPLLRTAMYAKGVEIYCAPTADSRDLWQASTTHIALEGGCFVLSANQFCRRKDYPPPPEYVFSGTEEDLTPDSVVSAGGSVIISPSGAVLAGPNYEGEALISADLDLGEIARAKFDFDVVGHYSRSEVLSLIVKDHPTNPVTFTSTSTKIEDQTK.

Residues 30-302 (VRATVVQAST…EALISADLDL (273 aa)) enclose the CN hydrolase domain. The active-site Proton acceptor is Glu-70. Lys-157 is a catalytic residue. Cys-191 serves as the catalytic Nucleophile.

Belongs to the carbon-nitrogen hydrolase superfamily. Nitrilase family. Highly expressed in leaves and cotyledons, lower expression in stems and roots.

It catalyses the reaction L-asparagine = 3-cyano-L-alanine + H2O. The catalysed reaction is 3-cyano-L-alanine + 2 H2O = L-aspartate + NH4(+). Functionally, involved in the cyanide detoxification pathway. Has nitrilase and nitrile-hydratase activity in the ratio 3.3:1, producing both asparagine and aspartic acid from beta-cyano-L-alanine (Ala(CN)). Can also use 3-phenylpropionitrile as substrate, but not indole-3-acetonitrile. The chain is Bifunctional nitrilase/nitrile hydratase NIT4B (NIT4B) from Lupinus angustifolius (Narrow-leaved blue lupine).